Consider the following 373-residue polypeptide: Chloroperoxidase (373 aa).

The first 20 residues, Met1–Arg20, serve as a signal peptide directing secretion. A Pyrrolidone carboxylic acid modification is found at Gln21. The N-linked (GlcNAc...) asparagine glycan is linked to Asn33. Cys50 is a heme binding site. Cys100 and Cys108 form a disulfide bridge. An N-linked (GlcNAc...) asparagine glycan is attached at Asn114. Mn(2+) contacts are provided by Glu125, His126, and Ser129. Glu204 is a catalytic residue. Asn237 is a glycosylation site (N-linked (GlcNAc...) asparagine). O-linked (Man) threonine glycosylation occurs at Thr259. 4 O-linked (Man) serine glycosylation sites follow: Ser260, Ser262, Ser263, and Ser269. An O-linked (Man) threonine glycan is attached at Thr271. A glycan (O-linked (Man) serine) is linked at Ser272. O-linked (Man) threonine glycosylation occurs at Thr273. 3 O-linked (Man...) threonine glycosylation sites follow: Thr296, Thr304, and Thr314. Residues Glu322–Leu373 constitute a propeptide that is removed on maturation.

Belongs to the chloroperoxidase family. It depends on heme b as a cofactor. Mn(2+) is required as a cofactor. Post-translationally, N- and O-glycosylated.

It carries out the reaction RH + Cl(-) + H2O2 = RCl + 2 H2O.. In terms of biological role, catalyzes peroxidative halogenations involved in the biosynthesis of clardariomycin (2,2-dichloro-1,3-cyclo-pentenedione). The enzyme also has potent catalase activity and in the absence of halide ion, acts as a peroxidase similar to plant peroxidases. The chain is Chloroperoxidase (CPO) from Leptoxyphium fumago (Caldariomyces fumago).